A 285-amino-acid polypeptide reads, in one-letter code: 4-diphosphocytidyl-2-C-methyl-D-erythritol kinase (285 aa).

The active site involves lysine 10. An ATP-binding site is contributed by 93–103 (PIGGGLGGGSS). Aspartate 135 is a catalytic residue.

Belongs to the GHMP kinase family. IspE subfamily.

The catalysed reaction is 4-CDP-2-C-methyl-D-erythritol + ATP = 4-CDP-2-C-methyl-D-erythritol 2-phosphate + ADP + H(+). Its pathway is isoprenoid biosynthesis; isopentenyl diphosphate biosynthesis via DXP pathway; isopentenyl diphosphate from 1-deoxy-D-xylulose 5-phosphate: step 3/6. In terms of biological role, catalyzes the phosphorylation of the position 2 hydroxy group of 4-diphosphocytidyl-2C-methyl-D-erythritol. The chain is 4-diphosphocytidyl-2-C-methyl-D-erythritol kinase from Ruthia magnifica subsp. Calyptogena magnifica.